We begin with the raw amino-acid sequence, 101 residues long: Small ribosomal subunit protein uS14 (101 aa).

It belongs to the universal ribosomal protein uS14 family. In terms of assembly, part of the 30S ribosomal subunit. Contacts proteins S3 and S10.

In terms of biological role, binds 16S rRNA, required for the assembly of 30S particles and may also be responsible for determining the conformation of the 16S rRNA at the A site. This is Small ribosomal subunit protein uS14 from Chromobacterium violaceum (strain ATCC 12472 / DSM 30191 / JCM 1249 / CCUG 213 / NBRC 12614 / NCIMB 9131 / NCTC 9757 / MK).